A 317-amino-acid chain; its full sequence is Thymidylate synthase (317 aa).

Residues arginine 24 and 179–180 (RR) contribute to the dUMP site. Cysteine 199 acts as the Nucleophile in catalysis. DUMP contacts are provided by residues 219-222 (RSAD), asparagine 230, and 260-262 (HIY). Aspartate 222 provides a ligand contact to (6R)-5,10-methylene-5,6,7,8-tetrahydrofolate. Alanine 316 is a binding site for (6R)-5,10-methylene-5,6,7,8-tetrahydrofolate.

Belongs to the thymidylate synthase family. Bacterial-type ThyA subfamily. Homodimer.

The protein resides in the cytoplasm. The catalysed reaction is dUMP + (6R)-5,10-methylene-5,6,7,8-tetrahydrofolate = 7,8-dihydrofolate + dTMP. Its pathway is pyrimidine metabolism; dTTP biosynthesis. Its function is as follows. Catalyzes the reductive methylation of 2'-deoxyuridine-5'-monophosphate (dUMP) to 2'-deoxythymidine-5'-monophosphate (dTMP) while utilizing 5,10-methylenetetrahydrofolate (mTHF) as the methyl donor and reductant in the reaction, yielding dihydrofolate (DHF) as a by-product. This enzymatic reaction provides an intracellular de novo source of dTMP, an essential precursor for DNA biosynthesis. In Oceanobacillus iheyensis (strain DSM 14371 / CIP 107618 / JCM 11309 / KCTC 3954 / HTE831), this protein is Thymidylate synthase.